The primary structure comprises 1925 residues: Plexin-D1 (1925 aa).

Low complexity predominate over residues 1-18 (MAPRAAGGAPLSARAAAA). The interval 1-23 (MAPRAAGGAPLSARAAAASPPPF) is disordered. Residues 1-46 (MAPRAAGGAPLSARAAAASPPPFQTPPRCPVPLLLLLLLGAARAGA) form the signal peptide. In terms of domain architecture, Sema spans 47–546 (LEIQRRFPSP…TSHQMARVKV (500 aa)). The Extracellular portion of the chain corresponds to 47–1271 (LEIQRRFPSP…TLQLGGSETA (1225 aa)). N86 is a glycosylation site (N-linked (GlcNAc...) asparagine). Disulfide bonds link C104/C114 and C140/C148. N155, N188, and N224 each carry an N-linked (GlcNAc...) asparagine glycan. Disulfide bonds link C322-C445 and C345-C389. N-linked (GlcNAc...) asparagine glycosylation is found at N481 and N500. 5 disulfide bridges follow: C549/C566, C555/C600, C558/C575, C569/C581, and C637/C661. The N-linked (GlcNAc...) asparagine glycan is linked to N583. N696, N736, N802, N965, N1017, N1060, N1099, N1118, N1132, N1237, and N1257 each carry an N-linked (GlcNAc...) asparagine glycan. 3 IPT/TIG domains span residues 891–979 (PEIH…FSYV), 981–1066 (PLVH…FWYM), and 1069–1160 (PVIT…LDPE). Residues 1272–1292 (IIVSIVICSVLLLLSVVALFV) traverse the membrane as a helical segment. At 1293 to 1925 (FCTKSRRAER…DNIYECYSEA (633 aa)) the chain is on the cytoplasmic side.

This sequence belongs to the plexin family. Interacts with NRP1 and SEMA4A. Interacts with SH3BP1; they dissociate upon SEMA3E binding to PLXND1 allowing SH3BP1 to transduce downstream signal through RAC1 inactivation. As to expression, detected at low levels in heart, placenta, lung, skeletal muscle, kidney, thymus and liver. Detected at very low levels in brain, colon, spleen, small intestine and peripheral blood leukocytes.

The protein resides in the cell membrane. Its subcellular location is the cell projection. It is found in the lamellipodium membrane. Cell surface receptor for SEMA4A and for class 3 semaphorins, such as SEMA3A, SEMA3C and SEMA3E. Plays an important role in cell-cell signaling, and in regulating the migration of a wide spectrum of cell types. Regulates the migration of thymocytes in the medulla. Regulates endothelial cell migration. Plays an important role in ensuring the specificity of synapse formation. Required for normal development of the heart and vasculature. Mediates anti-angiogenic signaling in response to SEMA3E. The chain is Plexin-D1 (PLXND1) from Homo sapiens (Human).